We begin with the raw amino-acid sequence, 109 residues long: EPIDERMAL PATTERNING FACTOR-like protein 4 (109 aa).

The first 26 residues, 1-26 (MGTFRRRRRFLLAALVTFALLHLFSA), serve as a signal peptide directing secretion. Intrachain disulfides connect cysteine 66/cysteine 100, cysteine 70/cysteine 76, and cysteine 73/cysteine 102.

This sequence belongs to the plant cysteine rich small secretory peptide family. Epidermal patterning factor subfamily. As to quaternary structure, interacts with ERECTA. Expressed at the base of the apical meristem at 3 days after germination. Not detected in the hypocotyl. Expressed in developing stems soon after bolting, in inflorescence stems and in young siliques.

It localises to the secreted. In terms of biological role, acts primarily as positive regulator of inflorescence growth. Endodermal expression is sufficient for proper inflorescence architecture. Redundantly involved with EPFL6 in procambial development regulation. Controls stomatal patterning. Mediates stomatal development inhibition. TMM (AC Q9SSD1) functions to dampen or block CLL2 signaling. Acts as a growth-regulatory ligand for ERECTA family receptors. This is EPIDERMAL PATTERNING FACTOR-like protein 4 from Arabidopsis thaliana (Mouse-ear cress).